The following is a 332-amino-acid chain: Cysteine and histidine-rich domain-containing protein 1 (332 aa).

N-acetylalanine is present on Ala2. Positions 2–77 (ALLCYNRGCG…KPPEPVKPEV (76 aa)) are interaction with PPP5C. Residues Cys5, Cys10, Cys24, His27, Cys42, and Cys43 each coordinate Zn(2+). CHORD domains follow at residues 5-64 (CYNR…KGRH) and 157-216 (CKNG…KGKH). Thr47 is subject to Phosphothreonine. At Ser51 the chain carries Phosphoserine. Cys59, His64, Cys157, Cys162, Cys176, His179, Cys194, Cys195, Cys211, and His216 together coordinate Zn(2+). The interaction with HSP90AA1 and HSP90AB1 stretch occupies residues 65–316 (NSEKPPEPVK…AEPMQWASLE (252 aa)). The region spanning 227–316 (VVPCRHDWHQ…AEPMQWASLE (90 aa)) is the CS domain.

As to quaternary structure, interacts with HSP90AA1, ROCK1 and ROCK2. Interacts with HSP90AB1 and PPP5C. In terms of tissue distribution, underexpressed in many breast and lung cancers.

Regulates centrosome duplication, probably by inhibiting the kinase activity of ROCK2. Proposed to act as co-chaperone for HSP90. May play a role in the regulation of NOD1 via a HSP90 chaperone complex. In vitro, has intrinsic chaperone activity. This function may be achieved by inhibiting association of ROCK2 with NPM1. Plays a role in ensuring the localization of the tyrosine kinase receptor EGFR to the plasma membrane, and thus ensures the subsequent regulation of EGFR activity and EGF-induced actin cytoskeleton remodeling. Involved in stress response. Prevents tumorigenesis. In Homo sapiens (Human), this protein is Cysteine and histidine-rich domain-containing protein 1 (CHORDC1).